The chain runs to 251 residues: Protein FAM216A (251 aa).

A disordered region spans residues 1-41 (MPSRWPGVAGPPALARTEGGEGSAGHSYPQNSKGTGEQHKA).

This sequence belongs to the FAM216 family.

In Mus musculus (Mouse), this protein is Protein FAM216A (Fam216a).